We begin with the raw amino-acid sequence, 116 residues long: Endocuticle structural glycoprotein SgAbd-4 (116 aa).

Residue Q1 is modified to Pyrrolidone carboxylic acid. The 73-residue stretch at 20–92 (DGSYQWNYET…PQGAHFPTPP (73 aa)) folds into the Chitin-binding type R&amp;R domain. O-linked (HexNAc...) threonine glycosylation is found at T90 and T107. A glycan (O-linked (HexNAc...) serine) is linked at S110. A glycan (O-linked (HexNAc...) threonine) is linked at T111. The residue at position 116 (P116) is a Proline amide.

Its function is as follows. Component of the abdominal endocuticle. In Schistocerca gregaria (Desert locust), this protein is Endocuticle structural glycoprotein SgAbd-4.